The sequence spans 447 residues: Tol-Pal system protein TolB (447 aa).

An N-terminal signal peptide occupies residues 1–34 (MSSRLPALPLSRRQALLGGAGSAAALLLPGGAQA). The segment at 426-447 (RNEQKVPTPGFASDPAWSPLLS) is disordered.

The protein belongs to the TolB family. The Tol-Pal system is composed of five core proteins: the inner membrane proteins TolA, TolQ and TolR, the periplasmic protein TolB and the outer membrane protein Pal. They form a network linking the inner and outer membranes and the peptidoglycan layer.

The protein localises to the periplasm. Functionally, part of the Tol-Pal system, which plays a role in outer membrane invagination during cell division and is important for maintaining outer membrane integrity. The protein is Tol-Pal system protein TolB of Rhodopseudomonas palustris (strain BisB18).